The primary structure comprises 462 residues: MTKDFIVKDIALAEFGRKELDIAETEMPGLMALRAEYGDSKPLAGARIVGSLHMTIQTAVLIETLVALGADVRWASCNIFSTQDHAAAAIAAGGTPVFAIKGQSLEEHWDYLDRSFMFEDGPNLILDDGGDATLYVLLGARAEAGEEIIPVPTSEEEEAIKAQIKKRMAASPGWFTKVRDQIKGVSEETTTGVHRLYDLVKQGQLPFPAINVNDSVTKSKFDNKYGCKESLVDGIRRATDTMMAGKVAVVMGYGDVGKGSAASLRGAGARVKVTEVDPICALQAAMDGFEVVLLEDVVGSADIFITTTGNKDVIRIEHMRAMKDMAIVGNIGHFDNEIQVAALKNHKWTNIKEQVDMIEMPNGNRLILLSEGRLLNLGNATGHPSFVMSASFTNQVLAQIELWTRADAYDNEVYILPKHLDEKVARLHLDRIGVKLTPLDPEQAAYIGVKPEGPFKPEHYRY.

Substrate-binding residues include threonine 55, aspartate 128, and glutamate 188. 189–191 (TTT) provides a ligand contact to NAD(+). Substrate-binding residues include lysine 218 and aspartate 222. NAD(+) is bound by residues asparagine 223, 252–257 (GYGDVG), glutamate 275, asparagine 310, 331–333 (IGH), and asparagine 376.

It belongs to the adenosylhomocysteinase family. It depends on NAD(+) as a cofactor.

It localises to the cytoplasm. The enzyme catalyses S-adenosyl-L-homocysteine + H2O = L-homocysteine + adenosine. It functions in the pathway amino-acid biosynthesis; L-homocysteine biosynthesis; L-homocysteine from S-adenosyl-L-homocysteine: step 1/1. In terms of biological role, may play a key role in the regulation of the intracellular concentration of adenosylhomocysteine. The protein is Adenosylhomocysteinase of Roseobacter denitrificans (strain ATCC 33942 / OCh 114) (Erythrobacter sp. (strain OCh 114)).